The primary structure comprises 185 residues: Crossover junction endodeoxyribonuclease RuvC (185 aa).

Residues aspartate 7, glutamate 66, and aspartate 137 contribute to the active site. Mg(2+) contacts are provided by aspartate 7, glutamate 66, and aspartate 137.

The protein belongs to the RuvC family. As to quaternary structure, homodimer which binds Holliday junction (HJ) DNA. The HJ becomes 2-fold symmetrical on binding to RuvC with unstacked arms; it has a different conformation from HJ DNA in complex with RuvA. In the full resolvosome a probable DNA-RuvA(4)-RuvB(12)-RuvC(2) complex forms which resolves the HJ. Mg(2+) is required as a cofactor.

It is found in the cytoplasm. The catalysed reaction is Endonucleolytic cleavage at a junction such as a reciprocal single-stranded crossover between two homologous DNA duplexes (Holliday junction).. Functionally, the RuvA-RuvB-RuvC complex processes Holliday junction (HJ) DNA during genetic recombination and DNA repair. Endonuclease that resolves HJ intermediates. Cleaves cruciform DNA by making single-stranded nicks across the HJ at symmetrical positions within the homologous arms, yielding a 5'-phosphate and a 3'-hydroxyl group; requires a central core of homology in the junction. The consensus cleavage sequence is 5'-(A/T)TT(C/G)-3'. Cleavage occurs on the 3'-side of the TT dinucleotide at the point of strand exchange. HJ branch migration catalyzed by RuvA-RuvB allows RuvC to scan DNA until it finds its consensus sequence, where it cleaves and resolves the cruciform DNA. This chain is Crossover junction endodeoxyribonuclease RuvC, found in Anaeromyxobacter dehalogenans (strain 2CP-1 / ATCC BAA-258).